We begin with the raw amino-acid sequence, 121 residues long: Protein GAT4 (121 aa).

Residues glutamate 29–glycine 48 form a disordered region. The GATA-type zinc finger occupies cysteine 53–cysteine 79.

In Saccharomyces cerevisiae (strain ATCC 204508 / S288c) (Baker's yeast), this protein is Protein GAT4 (GAT4).